A 209-amino-acid polypeptide reads, in one-letter code: ATP phosphoribosyltransferase (209 aa).

Belongs to the ATP phosphoribosyltransferase family. Short subfamily. Heteromultimer composed of HisG and HisZ subunits.

The protein resides in the cytoplasm. The catalysed reaction is 1-(5-phospho-beta-D-ribosyl)-ATP + diphosphate = 5-phospho-alpha-D-ribose 1-diphosphate + ATP. The protein operates within amino-acid biosynthesis; L-histidine biosynthesis; L-histidine from 5-phospho-alpha-D-ribose 1-diphosphate: step 1/9. In terms of biological role, catalyzes the condensation of ATP and 5-phosphoribose 1-diphosphate to form N'-(5'-phosphoribosyl)-ATP (PR-ATP). Has a crucial role in the pathway because the rate of histidine biosynthesis seems to be controlled primarily by regulation of HisG enzymatic activity. The chain is ATP phosphoribosyltransferase from Caldicellulosiruptor saccharolyticus (strain ATCC 43494 / DSM 8903 / Tp8T 6331).